A 166-amino-acid chain; its full sequence is Phosphopantetheine adenylyltransferase (166 aa).

Serine 9 contributes to the substrate binding site. Residues 9–10 (SF) and histidine 17 contribute to the ATP site. Residues lysine 41, threonine 74, and arginine 88 each coordinate substrate. Residues 89–91 (GLR), glutamate 99, and 124–130 (DSFISSS) each bind ATP.

Belongs to the bacterial CoaD family. In terms of assembly, homohexamer. It depends on Mg(2+) as a cofactor.

It is found in the cytoplasm. It catalyses the reaction (R)-4'-phosphopantetheine + ATP + H(+) = 3'-dephospho-CoA + diphosphate. It functions in the pathway cofactor biosynthesis; coenzyme A biosynthesis; CoA from (R)-pantothenate: step 4/5. Its function is as follows. Reversibly transfers an adenylyl group from ATP to 4'-phosphopantetheine, yielding dephospho-CoA (dPCoA) and pyrophosphate. The sequence is that of Phosphopantetheine adenylyltransferase from Lactobacillus johnsonii (strain CNCM I-12250 / La1 / NCC 533).